The sequence spans 712 residues: Capsid protein (712 aa).

Disordered stretches follow at residues 614–633 and 646–665; these read LTST…KEVR and CWMS…PESS. Positions 670–706 form a coiled coil; the sequence is YDNHTKLAKRVKKEIHNQNRRHRLLLAHLRRERDRLL.

This sequence belongs to the anelloviridae capsid protein family.

Its subcellular location is the virion. In terms of biological role, self-assembles to form an icosahedral capsid with a T=1 symmetry, about 30 nm in diameter, and consisting of 60 capsid proteins. The capsid encapsulates the genomic DNA. Capsid protein is involved in attachment and entry into the host cell. The sequence is that of Capsid protein from Torque teno tamarin virus (isolate So-TTV2).